A 428-amino-acid chain; its full sequence is Light-independent protochlorophyllide reductase subunit N (428 aa).

[4Fe-4S] cluster is bound by residues Cys31, Cys56, and Cys117.

The protein belongs to the BchN/ChlN family. As to quaternary structure, protochlorophyllide reductase is composed of three subunits; BchL, BchN and BchB. Forms a heterotetramer of two BchB and two BchN subunits. Requires [4Fe-4S] cluster as cofactor.

The catalysed reaction is chlorophyllide a + oxidized 2[4Fe-4S]-[ferredoxin] + 2 ADP + 2 phosphate = protochlorophyllide a + reduced 2[4Fe-4S]-[ferredoxin] + 2 ATP + 2 H2O. It participates in porphyrin-containing compound metabolism; bacteriochlorophyll biosynthesis (light-independent). Component of the dark-operative protochlorophyllide reductase (DPOR) that uses Mg-ATP and reduced ferredoxin to reduce ring D of protochlorophyllide (Pchlide) to form chlorophyllide a (Chlide). This reaction is light-independent. The NB-protein (BchN-BchB) is the catalytic component of the complex. This is Light-independent protochlorophyllide reductase subunit N from Rhodopseudomonas palustris (strain BisB5).